Consider the following 570-residue polypeptide: Proline--tRNA ligase (570 aa).

Belongs to the class-II aminoacyl-tRNA synthetase family. ProS type 1 subfamily. Homodimer.

It is found in the cytoplasm. The catalysed reaction is tRNA(Pro) + L-proline + ATP = L-prolyl-tRNA(Pro) + AMP + diphosphate. Functionally, catalyzes the attachment of proline to tRNA(Pro) in a two-step reaction: proline is first activated by ATP to form Pro-AMP and then transferred to the acceptor end of tRNA(Pro). As ProRS can inadvertently accommodate and process non-cognate amino acids such as alanine and cysteine, to avoid such errors it has two additional distinct editing activities against alanine. One activity is designated as 'pretransfer' editing and involves the tRNA(Pro)-independent hydrolysis of activated Ala-AMP. The other activity is designated 'posttransfer' editing and involves deacylation of mischarged Ala-tRNA(Pro). The misacylated Cys-tRNA(Pro) is not edited by ProRS. The chain is Proline--tRNA ligase from Clostridium tetani (strain Massachusetts / E88).